The sequence spans 779 residues: Molybdenum cofactor sulfurase (779 aa).

An N6-(pyridoxal phosphate)lysine modification is found at K247. C409 is an active-site residue. The MOSC domain occupies 624-779 (SQSLGLEGVR…LTCGDVIVVS (156 aa)). At S732 the chain carries Phosphoserine.

This sequence belongs to the class-V pyridoxal-phosphate-dependent aminotransferase family. MOCOS subfamily. It depends on pyridoxal 5'-phosphate as a cofactor.

The enzyme catalyses Mo-molybdopterin + L-cysteine + AH2 = thio-Mo-molybdopterin + L-alanine + A + H2O. It participates in cofactor biosynthesis; molybdopterin biosynthesis. Functionally, sulfurates the molybdenum cofactor. Sulfation of molybdenum is essential for xanthine dehydrogenase (XDH) and aldehyde oxidase (ADO) enzymes in which molybdenum cofactor is liganded by 1 oxygen and 1 sulfur atom in active form. The polypeptide is Molybdenum cofactor sulfurase (Drosophila mojavensis (Fruit fly)).